Consider the following 351-residue polypeptide: Dihydroorotate dehydrogenase (quinone) (351 aa).

Residues 61–65 and Thr-85 each bind FMN; that span reads AGLDK. Lys-65 serves as a coordination point for substrate. 110–114 provides a ligand contact to substrate; the sequence is NRMGF. FMN contacts are provided by Asn-139 and Asn-172. Asn-172 is a substrate binding site. Residue Ser-175 is the Nucleophile of the active site. Position 177 (Asn-177) interacts with substrate. FMN contacts are provided by Lys-217 and Thr-245. Position 246–247 (246–247) interacts with substrate; it reads NT. Residues Gly-268, Gly-297, and 318–319 contribute to the FMN site; that span reads YS.

The protein belongs to the dihydroorotate dehydrogenase family. Type 2 subfamily. Monomer. The cofactor is FMN.

It is found in the cell membrane. It catalyses the reaction (S)-dihydroorotate + a quinone = orotate + a quinol. The protein operates within pyrimidine metabolism; UMP biosynthesis via de novo pathway; orotate from (S)-dihydroorotate (quinone route): step 1/1. Functionally, catalyzes the conversion of dihydroorotate to orotate with quinone as electron acceptor. The protein is Dihydroorotate dehydrogenase (quinone) of Xanthomonas oryzae pv. oryzae (strain MAFF 311018).